The following is a 352-amino-acid chain: UDP-N-acetylglucosamine--N-acetylmuramyl-(pentapeptide) pyrophosphoryl-undecaprenol N-acetylglucosamine transferase (352 aa).

Residues 13–15 (TGG), Asn-125, Arg-161, Ser-189, Ile-242, 261–266 (ALTVSE), and Gln-286 contribute to the UDP-N-acetyl-alpha-D-glucosamine site.

This sequence belongs to the glycosyltransferase 28 family. MurG subfamily.

The protein resides in the cell inner membrane. The catalysed reaction is di-trans,octa-cis-undecaprenyl diphospho-N-acetyl-alpha-D-muramoyl-L-alanyl-D-glutamyl-meso-2,6-diaminopimeloyl-D-alanyl-D-alanine + UDP-N-acetyl-alpha-D-glucosamine = di-trans,octa-cis-undecaprenyl diphospho-[N-acetyl-alpha-D-glucosaminyl-(1-&gt;4)]-N-acetyl-alpha-D-muramoyl-L-alanyl-D-glutamyl-meso-2,6-diaminopimeloyl-D-alanyl-D-alanine + UDP + H(+). It functions in the pathway cell wall biogenesis; peptidoglycan biosynthesis. Its function is as follows. Cell wall formation. Catalyzes the transfer of a GlcNAc subunit on undecaprenyl-pyrophosphoryl-MurNAc-pentapeptide (lipid intermediate I) to form undecaprenyl-pyrophosphoryl-MurNAc-(pentapeptide)GlcNAc (lipid intermediate II). The protein is UDP-N-acetylglucosamine--N-acetylmuramyl-(pentapeptide) pyrophosphoryl-undecaprenol N-acetylglucosamine transferase of Erwinia tasmaniensis (strain DSM 17950 / CFBP 7177 / CIP 109463 / NCPPB 4357 / Et1/99).